Consider the following 540-residue polypeptide: Beta-2-syntrophin (540 aa).

The segment at 73–114 is disordered; sequence LPNGGGAGDSLPGSPSRGLGPPSPPAPPRGPAGEAGASPPVR. The span at 81 to 92 shows a compositional bias: low complexity; it reads DSLPGSPSRGLG. The segment covering 93-102 has biased composition (pro residues); that stretch reads PPSPPAPPRG. Phosphoserine is present on residues serine 95, serine 110, serine 129, serine 211, serine 222, serine 233, serine 393, and serine 395. The span at 103 to 112 shows a compositional bias: low complexity; it reads PAGEAGASPP. Residues 115–198 form the PDZ domain; the sequence is RVRVVKQEAG…EVLLEVKFIR (84 aa). PH domains are found at residues 163–300 and 325–437; these read ILSV…TNIM and EVKH…QGCH. The tract at residues 220-240 is disordered; sequence PQSPSFSGSEDSGSPKHQNST. Over residues 222–231 the composition is skewed to low complexity; the sequence is SPSFSGSEDS. An SU domain is found at 484-540; the sequence is PFERLKMSADDGIRNLYLDFGGPEGELTMDLHSCPKPIVFVLHTFLSAKVTRMGLLV. The segment at 518-540 is calmodulin-binding; the sequence is PKPIVFVLHTFLSAKVTRMGLLV.

This sequence belongs to the syntrophin family. Monomer and homodimer. Interacts with the other members of the syntrophin family: SNTA1 and SNTB1; and with the sodium channel proteins SCN4A and SCN5A. Interacts with SAST, MAST205, microtubules and microtubule-associated proteins. Interacts with the dystrophin protein DMD and related proteins DTNA and UTRN, and with the neuroregulin receptor ERBB4. Interacts with PTPRN when phosphorylated, protecting PTPRN from protein cleavage by CAPN1. Dephosphorylation upon insulin stimulation disrupts the interaction with PTPRN and results in the cleavage of PTPRN. Interacts with DTNB. Phosphorylated. Partially dephosphorylated upon insulin stimulation. In terms of tissue distribution, ubiquitous. Isoform 1 is the predominant isoform. Weak level of isoform 2 is present in all tested tissues, except in liver and heart where it is highly expressed.

The protein resides in the membrane. Its subcellular location is the cytoplasmic vesicle. It is found in the secretory vesicle membrane. It localises to the cell junction. The protein localises to the cytoplasm. The protein resides in the cytoskeleton. Adapter protein that binds to and probably organizes the subcellular localization of a variety of membrane proteins. May link various receptors to the actin cytoskeleton and the dystrophin glycoprotein complex. May play a role in the regulation of secretory granules via its interaction with PTPRN. The chain is Beta-2-syntrophin (SNTB2) from Homo sapiens (Human).